Reading from the N-terminus, the 85-residue chain is Large ribosomal subunit protein bL27 (85 aa).

The interval 1–25 (MAHKKGVGSSRNGRDSNPKMLGVKR) is disordered.

The protein belongs to the bacterial ribosomal protein bL27 family.

The chain is Large ribosomal subunit protein bL27 from Roseiflexus castenholzii (strain DSM 13941 / HLO8).